A 312-amino-acid polypeptide reads, in one-letter code: D-alanine--D-alanine ligase (312 aa).

Residues 108–308 form the ATP-grasp domain; sequence KLVWQQTGIP…YSELVVKVLS (201 aa). An ATP-binding site is contributed by 138–193; that stretch reads VAKLGVPLFVKPASEGSSVAVEKVKSADALPAALEEAAKHDKIVIVEKSIEGGGEY. Residues Asp262, Glu275, and Asn277 each contribute to the Mg(2+) site.

Belongs to the D-alanine--D-alanine ligase family. The cofactor is Mg(2+). Requires Mn(2+) as cofactor.

The protein localises to the cytoplasm. The enzyme catalyses 2 D-alanine + ATP = D-alanyl-D-alanine + ADP + phosphate + H(+). The protein operates within cell wall biogenesis; peptidoglycan biosynthesis. Functionally, cell wall formation. The polypeptide is D-alanine--D-alanine ligase (Burkholderia mallei (strain NCTC 10247)).